Here is a 1215-residue protein sequence, read N- to C-terminus: MYVKQIIIQGFKSYKDQTVIEPFSPKHNVIVGRNGSGKSNFFAAIRFVLSDAYTHLGREERQALLHEGSGSAVMSAYVEIIFDNSDERFPTGKPELVLRRTIGLKKDEYTLDRKNATKNDVMNLLESAGFSRSNPYYIVPQGRVTALTNMKDSERLNLLKEVAGTQVYEARRAESLKIMHETNSKREKIDELLDFINERLAELEEEKDELRNFQEKDKERRCLEYTIYSREQQEIASFLDSLEEQRQTGVEDTDINRDRFIQGEKEMAQVDAEIAECKQQIEFLKVDKAQLEDERREASKALAQVELQAKSLSDNQAAAQESKARHDESLKAVQSAIEERQTELKELVPRFISAKDAEDAARAKLTEAETARQRLYAKQGRNSRFKNKSERDKWLQAEIKNNNASISSVQSVLSQTQEDINDIENDIALLEPETERLRQQIDGRGDTIQSVEQQVQAAKDERDRLMDQRKYVDWPRTSCATLTIHRELWREEAKLDSILINASNEVDRAERNLSQMMDHNTSRGIAAVRRIKRQHNLEGVYGTLAELFEVNDRYRTAVEVTAGQSLFHYVVDTDDTATKVLEILQHEKAGRVTFMPLNRLRTKPLNMPKASDTIPMIEKLQYDRAYEKAFQHVFGKTIICPNLQVASQYARSHGVNATTPEGDRSDKRGALTGGFHDSRQSRLDAVKNLAKWRDEYETKKSRGSEIRKELEELDQLITRAVGELQKLEQQRHQVQNSSGPLRQELRSKRDLLQKQNDNLDAKRRALRNIEGNLAALKDQVDAFEAELSSPFHKALTDEEEARLESLNSNVQEYRREYQELSGKRSELETRKSVLEVELRENLNPRLDQLLAQDADIADEDGQGNIKETQREQKRLTKVLDKLAQRLAQVDESMEQANSRVTELTQRNAESRRELEELAKSIEKHQRRMEKSMQKKAALTKQAAECAANIRDLGVLPDEAFTKYKNTDSNTVVKKLHKVNEALKKYAHVNKKAFEQYNNFTKQRETLTSRREELDASQKSIDDLISVLDHRKDEAIERTFKQVSREFATIFEKLVPAGRGRLIIQRKTDRTQRAEDDLESEDEEAKHSVENYVGVGISVSFNSKHDDQQRIQQLSGGQKSLCALALVFAIQACDPAPFYLFDEIDANLDAQYRTAVAQMLKTISDSTNGQFICTTFRPEMLHVAEKCYGVSFRQKASTIDVVSREEALKFVEEQKS.

32–39 is an ATP binding site; sequence GRNGSGKS. The stretch at 177–522 forms a coiled coil; sequence KIMHETNSKR…LSQMMDHNTS (346 aa). The tract at residues 313–332 is disordered; it reads SDNQAAAQESKARHDESLKA. In terms of domain architecture, SMC hinge spans 538–650; it reads EGVYGTLAEL…PNLQVASQYA (113 aa). The segment at 654 to 676 is disordered; it reads GVNATTPEGDRSDKRGALTGGFH. Residues 684–1091 are a coiled coil; sequence DAVKNLAKWR…EEAKHSVENY (408 aa).

Belongs to the SMC family. SMC3 subfamily.

It is found in the nucleus. Involved in chromosome segregation in mitosis. The chain is Chromosome segregation protein sudA (sudA) from Emericella nidulans (strain FGSC A4 / ATCC 38163 / CBS 112.46 / NRRL 194 / M139) (Aspergillus nidulans).